Here is a 407-residue protein sequence, read N- to C-terminus: Probable tRNA sulfurtransferase (407 aa).

Residues 61–165 enclose the THUMP domain; the sequence is NEITYRLSKI…LDAIYMYEEV (105 aa). Residues 183–184, 208–209, R265, G287, and Q296 contribute to the ATP site; these read ML and HF.

This sequence belongs to the ThiI family.

The protein resides in the cytoplasm. The catalysed reaction is [ThiI sulfur-carrier protein]-S-sulfanyl-L-cysteine + a uridine in tRNA + 2 reduced [2Fe-2S]-[ferredoxin] + ATP + H(+) = [ThiI sulfur-carrier protein]-L-cysteine + a 4-thiouridine in tRNA + 2 oxidized [2Fe-2S]-[ferredoxin] + AMP + diphosphate. The enzyme catalyses [ThiS sulfur-carrier protein]-C-terminal Gly-Gly-AMP + S-sulfanyl-L-cysteinyl-[cysteine desulfurase] + AH2 = [ThiS sulfur-carrier protein]-C-terminal-Gly-aminoethanethioate + L-cysteinyl-[cysteine desulfurase] + A + AMP + 2 H(+). The protein operates within cofactor biosynthesis; thiamine diphosphate biosynthesis. In terms of biological role, catalyzes the ATP-dependent transfer of a sulfur to tRNA to produce 4-thiouridine in position 8 of tRNAs, which functions as a near-UV photosensor. Also catalyzes the transfer of sulfur to the sulfur carrier protein ThiS, forming ThiS-thiocarboxylate. This is a step in the synthesis of thiazole, in the thiamine biosynthesis pathway. The sulfur is donated as persulfide by IscS. The protein is Probable tRNA sulfurtransferase of Staphylococcus aureus (strain MSSA476).